A 525-amino-acid chain; its full sequence is Nucleolar complex protein 4 homolog B (525 aa).

Over residues 1-10 (MAARKAKHAF) the composition is skewed to basic residues. The tract at residues 1–21 (MAARKAKHAFRSQATQSDAER) is disordered. Transmembrane regions (helical) follow at residues 307-327 (AAYD…FILI), 358-378 (FFHL…LVAA), and 386-406 (LALT…CNLI).

It belongs to the CBF/MAK21 family.

It is found in the nucleus membrane. The protein localises to the nucleus. It localises to the nucleolus. The chain is Nucleolar complex protein 4 homolog B (noc4l-b) from Xenopus laevis (African clawed frog).